The chain runs to 159 residues: Ribonuclease H (159 aa).

The 143-residue stretch at 8–150 (NLKEITMYTD…CDQLAVAAAK (143 aa)) folds into the RNase H type-1 domain. Residues D17, E55, D77, and D142 each coordinate Mg(2+).

This sequence belongs to the RNase H family. In terms of assembly, monomer. It depends on Mg(2+) as a cofactor.

The protein localises to the cytoplasm. The enzyme catalyses Endonucleolytic cleavage to 5'-phosphomonoester.. Endonuclease that specifically degrades the RNA of RNA-DNA hybrids. This Desulforamulus reducens (strain ATCC BAA-1160 / DSM 100696 / MI-1) (Desulfotomaculum reducens) protein is Ribonuclease H.